The chain runs to 413 residues: 2,3-diketo-5-methylthiopentyl-1-phosphate enolase (413 aa).

The Proton acceptor role is filled by lysine 98. Residues lysine 147, 173-176 (KDDE), histidine 264, glycine 337, and 359-360 (GG) contribute to the substrate site. Positions 173, 175, and 176 each coordinate Mg(2+). Position 173 is an N6-carboxylysine (lysine 173).

Belongs to the RuBisCO large chain family. Type IV subfamily. Homodimer. The cofactor is Mg(2+).

It carries out the reaction 5-methylsulfanyl-2,3-dioxopentyl phosphate = 2-hydroxy-5-methylsulfanyl-3-oxopent-1-enyl phosphate. Its pathway is amino-acid biosynthesis; L-methionine biosynthesis via salvage pathway; L-methionine from S-methyl-5-thio-alpha-D-ribose 1-phosphate: step 3/6. Functionally, catalyzes the enolization of 2,3-diketo-5-methylthiopentyl-1-phosphate (DK-MTP-1-P) into 2-hydroxy-3-keto-5-methylthiopentenyl-1-phosphate (HK-MTPenyl-1-P). The protein is 2,3-diketo-5-methylthiopentyl-1-phosphate enolase (mtnW) of Geobacillus kaustophilus (strain HTA426).